Here is a 157-residue protein sequence, read N- to C-terminus: Electron transfer flavoprotein regulatory factor 1 homolog (157 aa).

Belongs to the complex I LYR family.

The protein resides in the mitochondrion. The protein is Electron transfer flavoprotein regulatory factor 1 homolog of Dictyostelium discoideum (Social amoeba).